The following is a 2832-amino-acid chain: Cyclic beta-(1,2)-glucan synthase NdvB (2832 aa).

7 helical membrane passes run 411–431 (FAIAGPNILLTILAMIVVYAF), 444–464 (IMLLLFALPASEGAMGLFNTV), 810–830 (LIPVAWLAASVMGWYYMEPTP), 831–851 (ALIWQLVLIFSLFVAPTLSLI), 880–900 (QVALRIVFIAHNAAMMADAIV), 938–958 (WTAPALALVSLALAAISDTGL), and 959–979 (PFIGLPFALIWAASPAVAWFV). Positions 1299–1506 (LASEARLTSL…NGQLREWFHA (208 aa)) constitute a Glycoamylase-like domain.

This sequence belongs to the NdvB family.

Its subcellular location is the cell inner membrane. It carries out the reaction [(1-&gt;2)-beta-D-glucosyl](n) + UDP-alpha-D-glucose = [(1-&gt;2)-beta-D-glucosyl](n+1) + UDP + H(+). Involved in the biosynthesis of cyclic beta-(1,2)-glucan. It seems that NdvB is involved in three enzymatic activities. First, it may catalyze the transfer of the first glucose from UDP-Glc to an unknown amino acid. In the second enzymatic activity (UDP-Glc:beta-(1,2) oligosaccharide glucosyltransferase), it may be responsible for chain elongation. Finally, in the third activity, it may catalyze glucan cyclization and release from the protein. NdvB is also involved in nodule invasion and in bacteroid development. This Rhizobium meliloti (strain 1021) (Ensifer meliloti) protein is Cyclic beta-(1,2)-glucan synthase NdvB.